A 590-amino-acid polypeptide reads, in one-letter code: 2-hydroxyacyl-CoA lyase (590 aa).

2-hydroxyisobutanoyl-CoA is bound by residues Gly43, Gln128, Gln255, 273–274 (RS), and Arg362. 410-412 (GDL) contacts thiamine diphosphate. Arg417 is a 2-hydroxyisobutanoyl-CoA binding site. Gly433 lines the thiamine diphosphate pocket. Asp460 is a binding site for Mg(2+). Thiamine diphosphate contacts are provided by residues 461–462 (GA) and 487–492 (NRAWNI). Residues Asn487 and Ala489 each coordinate Mg(2+). Glu493 functions as the Proton acceptor in the catalytic mechanism. A 2-hydroxyisobutanoyl-CoA-binding site is contributed by 561–564 (DSGK). The interval 566–590 (LGFVPDYQALTPWNDAEVARRQEGI) is C-terminal lid.

Belongs to the TPP enzyme family. As to quaternary structure, a homotetramer formed by a dimer of dimers; active sites are located in the dimer interface. Requires Mg(2+) as cofactor. It depends on thiamine diphosphate as a cofactor.

It catalyses the reaction 2-hydroxyisobutanoyl-CoA = formyl-CoA + acetone. Activity is stimulated by thiamine diphosphate. A lyase that reversibly degrades 2-hydroxyisobutyryl-CoA (2-HIB-CoA) to acetone and formyl-CoA. Probably also cleaves 2-hydroxy-2-methylbutyryl-CoA to butanone and formyl-CoA. Does not act on 2-hydroxy-2-ethylbutyryl-CoA. A C-terminal lid closes the active site upon substrate binding, and with residues Leu-127 and Ile-492 restricts the size of the active site cavity so it can only use short-chain (C4 and C5) acyl substrates. Part of a pathway that allows cells to grow on 2-methylpropane-1,2-diol or 2-hydroxyisobutyric acid (2-HIBA) as a sole carbon source. This Actinomycetospora chiangmaiensis (strain DSM 45062 / JCM 15998 / CCTCC AA 205017 / NBRC 104400 / YIM 0006) protein is 2-hydroxyacyl-CoA lyase.